We begin with the raw amino-acid sequence, 625 residues long: Probable potassium transport system protein Kup (625 aa).

The next 12 membrane-spanning stretches (helical) occupy residues 10 to 30, 50 to 70, 102 to 122, 142 to 162, 172 to 192, 215 to 235, 250 to 270, 284 to 304, 340 to 360, 369 to 389, 397 to 417, and 422 to 442; these read LAALTLAAVGIVYGDIGTSPL, LLGVVSLIVWGLIIIVSLKYV, YFPLLVMGLFGATLFYGDSVI, FDPYVVPLTVAVLVGLYSVQA, FGPIMVVWFATLAVMGVVNII, FLAFIALGAVVLAFTGAEALY, WFLVAFPALALNYLGQGALLL, LGAWSIYPLVALSTMAAIIAS, IYIPAVNWLQMAVVVMAVVGF, AYGIAVTATMLVTTILTFFVI, LLLCLASTGFFLVIDLSLFSA, and LFHGGWFPLLLGTILFTLMLT.

This sequence belongs to the HAK/KUP transporter (TC 2.A.72) family.

It is found in the cell inner membrane. The enzyme catalyses K(+)(in) + H(+)(in) = K(+)(out) + H(+)(out). Functionally, transport of potassium into the cell. Likely operates as a K(+):H(+) symporter. The chain is Probable potassium transport system protein Kup from Janthinobacterium sp. (strain Marseille) (Minibacterium massiliensis).